A 506-amino-acid polypeptide reads, in one-letter code: Glutamate--tRNA ligase (506 aa).

The short motif at 24–34 (PSPTGLQHIGG) is the 'HIGH' region element. Residues Cys-121, Cys-123, Cys-148, and His-150 each coordinate Zn(2+). The 'KMSKS' region signature appears at 266 to 270 (KLSKR). Lys-269 lines the ATP pocket.

This sequence belongs to the class-I aminoacyl-tRNA synthetase family. Glutamate--tRNA ligase type 1 subfamily. As to quaternary structure, monomer. Zn(2+) is required as a cofactor.

The protein localises to the cytoplasm. The enzyme catalyses tRNA(Glu) + L-glutamate + ATP = L-glutamyl-tRNA(Glu) + AMP + diphosphate. Catalyzes the attachment of glutamate to tRNA(Glu) in a two-step reaction: glutamate is first activated by ATP to form Glu-AMP and then transferred to the acceptor end of tRNA(Glu). The polypeptide is Glutamate--tRNA ligase (Borrelia duttonii (strain Ly)).